The chain runs to 888 residues: Pyruvate dehydrogenase E1 component (888 aa).

Homodimer. Part of the PDH complex, consisting of multiple copies of pyruvate dehydrogenase (E1), dihydrolipoamide acetyltransferase (E2) and lipoamide dehydrogenase (E3). Thiamine diphosphate is required as a cofactor.

It catalyses the reaction N(6)-[(R)-lipoyl]-L-lysyl-[protein] + pyruvate + H(+) = N(6)-[(R)-S(8)-acetyldihydrolipoyl]-L-lysyl-[protein] + CO2. Component of the pyruvate dehydrogenase (PDH) complex, that catalyzes the overall conversion of pyruvate to acetyl-CoA and CO(2). The polypeptide is Pyruvate dehydrogenase E1 component (aceE) (Buchnera aphidicola subsp. Schizaphis graminum (strain Sg)).